The sequence spans 667 residues: Beta-galactosidase LacA (667 aa).

A substrate-binding site is contributed by Arg-109. Cys-113 contacts Zn(2+). Asn-147 is a substrate binding site. The active-site Proton donor is Glu-148. 3 residues coordinate Zn(2+): Cys-153, Cys-155, and Cys-158. Glu-307 (nucleophile) is an active-site residue. Residues Trp-315 and 355–358 each bind substrate; that span reads EKFH.

It belongs to the glycosyl hydrolase 42 family.

The enzyme catalyses Hydrolysis of terminal non-reducing beta-D-galactose residues in beta-D-galactosides.. In terms of biological role, hydrolyzes lactose, oNP-galactoside (oNPG), pNP-galactosidase (pNPG), pNP-mannoside, pNP-glucoside, pNP-fucoside, pNP-N-acetylglucosamide, but not pNP-arabinoside or 4-methylumbelliferyl-beta-galactopyranoside (MUG). Transgalactosylates lactose at 10 g/L, but not at 270 g/L. This Lactobacillus acidophilus protein is Beta-galactosidase LacA.